The following is a 1030-amino-acid chain: Protein KRBA1 (1030 aa).

5 disordered regions span residues 27 to 56 (EPGR…GQPR), 80 to 208 (KGAM…NSPL), 225 to 255 (HPET…GSPP), 281 to 505 (EAQD…GLEN), and 634 to 788 (GGPS…PASS). S101 carries the post-translational modification Phosphoserine. A compositionally biased stretch (low complexity) spans 102 to 114 (PEAAAAREPCPLR). Residues 124–143 (PTSQPHLATTPTDSSCSSGP) show a composition bias toward polar residues. Residues 157–168 (TADKPWPTRKEG) show a composition bias toward basic and acidic residues. S177, S182, S184, S229, S253, and S355 each carry phosphoserine. The segment covering 372–389 (PEAQAASASSSPLEALEA) has biased composition (low complexity). The span at 397-418 (NGSSPSQLPPTSCSQNPQPGDS) shows a compositional bias: polar residues. Over residues 419 to 437 (RSQKPELQPHRSHSEEATR) the composition is skewed to basic and acidic residues. Low complexity-rich tracts occupy residues 485–502 (QGQH…PLQG) and 642–651 (PGSSSSFSGS). Residues 654 to 674 (EDPRPEPDLWKPLPQERDRLP) are compositionally biased toward basic and acidic residues. The span at 689-698 (TPAGSSGGSP) shows a compositional bias: gly residues. Over residues 760 to 784 (QGPPELPSESPPPELPPPEAAPPVL) the composition is skewed to pro residues. The stretch at 799-832 (LQQELHSLGAALAEKLDRLATALAGLAQEVATMR) forms a coiled coil. A compositionally biased stretch (basic residues) spans 870–887 (RHLPYWRQKGPTRPKPKI). Residues 870 to 1030 (RHLPYWRQKG…EHRDPRWGAH (161 aa)) form a disordered region. Over residues 913-923 (PLPPDAPPAEP) the composition is skewed to pro residues. 2 stretches are compositionally biased toward low complexity: residues 929–953 (SSSQ…LLAH) and 966–984 (PAAL…ADAD). Residues 1019 to 1030 (GGEHRDPRWGAH) show a composition bias toward basic and acidic residues.

Expressed in brain (cerebellum).

This Homo sapiens (Human) protein is Protein KRBA1 (KRBA1).